The chain runs to 363 residues: Protein EXORDIUM-like 5 (363 aa).

A signal peptide spans 1 to 25 (MSSPATTITFFFFFTLSSFFYITSS). N-linked (GlcNAc...) asparagine glycosylation occurs at asparagine 144.

The protein belongs to the EXORDIUM family.

It localises to the secreted. Its subcellular location is the extracellular space. It is found in the apoplast. Its function is as follows. May play a role in a brassinosteroid-dependent regulation of growth and development. This chain is Protein EXORDIUM-like 5 (EXL5), found in Arabidopsis thaliana (Mouse-ear cress).